The chain runs to 526 residues: Na(+)/H(+) antiporter NhaB (526 aa).

The next 11 membrane-spanning stretches (helical) occupy residues 14 to 34, 63 to 83, 99 to 119, 122 to 142, 146 to 166, 206 to 226, 239 to 259, 307 to 327, 357 to 377, 451 to 471, and 479 to 499; these read FLGY…LVNP, CYPL…GMTS, MLLV…LFVF, LLLR…AAAF, FLDA…FYGI, LLMH…VGEP, FVSF…CGIL, AVIG…VGLI, FTAL…QQLF, ATPN…APLI, and VIMA…CVEF.

It belongs to the NhaB Na(+)/H(+) (TC 2.A.34) antiporter family.

The protein localises to the cell inner membrane. It carries out the reaction 2 Na(+)(in) + 3 H(+)(out) = 2 Na(+)(out) + 3 H(+)(in). Functionally, na(+)/H(+) antiporter that extrudes sodium in exchange for external protons. This chain is Na(+)/H(+) antiporter NhaB, found in Pectobacterium carotovorum subsp. carotovorum (strain PC1).